Consider the following 445-residue polypeptide: Aminopeptidase S (445 aa).

Positions 1 to 45 are cleaved as a signal peptide; it reads MRPNRFSLRRSPTAVAAVALAAVLAAGAPAAQAAGAAAPTAAAAA. Aspartate 48 and isoleucine 49 together coordinate Ca(2+). 2 residues coordinate Zn(2+): histidine 130 and aspartate 142. Glutamate 176 functions as the Proton acceptor in the catalytic mechanism. 3 residues coordinate Zn(2+): glutamate 177, aspartate 205, and histidine 292. A disulfide bridge connects residues cysteine 290 and cysteine 295. Residues aspartate 307 and aspartate 311 each contribute to the Ca(2+) site. Residues 325–445 enclose the P/Homo B domain; it reads GEPPTGEGVF…GYIDSWKLTF (121 aa). Positions 330–445 are cleaved as a propeptide — removed in mature form; sequence GEGVFSNTTD…GYIDSWKLTF (116 aa).

The protein belongs to the peptidase M28 family. M28A subfamily. As to quaternary structure, monomer. Ca(2+) is required as a cofactor. Requires Zn(2+) as cofactor. Mn(2+) serves as cofactor. It depends on Co(2+) as a cofactor.

Its subcellular location is the secreted. The catalysed reaction is Release of an N-terminal amino acid with a preference for large hydrophobic amino-terminus residues.. Its activity is regulated as follows. Calcium activates the enzyme, inhibited by 1,10-phenanthroline, EDTA and EGTA. End-product inhibited by L-amino acids. Non-competitively inhibited by NaF and NaH(2)PO(4). Functionally, an exopeptidase specific for larger hydrophobic amino acids (especially leucine), no cleavage occurs if the next residue is proline. This is Aminopeptidase S from Streptomyces griseus subsp. griseus (strain JCM 4626 / CBS 651.72 / NBRC 13350 / KCC S-0626 / ISP 5235).